Reading from the N-terminus, the 487-residue chain is Lysophospholipid acyltransferase 5 (487 aa).

Position 2 is an N-acetylalanine (Ala-2). 6 helical membrane passes run 44 to 64 (LIIS…YLFY), 84 to 104 (FNFG…FLIL), 111 to 131 (ITAV…GYYY), 180 to 200 (GVPS…FLVG), 227 to 247 (IIPA…YTLL), and 285 to 305 (VTCW…FNGF). Residues Asn-338 and His-374 contribute to the active site. 3 helical membrane-spanning segments follow: residues 364 to 384 (GLSL…LVCF), 422 to 442 (LVQQ…FCLF), and 453 to 473 (SIYF…PYIH). Positions 484-487 (KKME) match the Di-lysine motif motif.

Belongs to the membrane-bound acyltransferase family. Highly expressed in liver, pancreas and adipose tissue. Very low expression in skeletal muscle and heart. Detected in neutrophils.

It is found in the endoplasmic reticulum membrane. It carries out the reaction a 1-acyl-sn-glycero-3-phosphocholine + an acyl-CoA = a 1,2-diacyl-sn-glycero-3-phosphocholine + CoA. It catalyses the reaction a 1-acyl-sn-glycero-3-phosphoethanolamine + an acyl-CoA = a 1,2-diacyl-sn-glycero-3-phosphoethanolamine + CoA. The catalysed reaction is a 1-acyl-sn-glycero-3-phospho-L-serine + an acyl-CoA = a 1,2-diacyl-sn-glycero-3-phospho-L-serine + CoA. The enzyme catalyses (9Z,12Z)-octadecadienoyl-CoA + a 1-acyl-sn-glycero-3-phosphocholine = 1-acyl-2-(9Z,12Z)-octadecadienoyl-sn-glycero-3-phosphocholine + CoA. It carries out the reaction (5Z,8Z,11Z,14Z)-eicosatetraenoyl-CoA + a 1-acyl-sn-glycero-3-phosphocholine = 1-acyl-2-(5Z,8Z,11Z,14Z-eicosatetraenoyl)-sn-glycero-3-phosphocholine + CoA. It catalyses the reaction dodecanoyl-CoA + 1-hexadecanoyl-sn-glycero-3-phosphocholine = 1-hexadecanoyl-2-dodecanoyl-sn-glycero-3-phosphocholine + CoA. The catalysed reaction is octadecanoyl-CoA + 1-hexadecanoyl-sn-glycero-3-phosphocholine = 1-hexadecanoyl-2-octadecanoyl-sn-glycero-3-phosphocholine + CoA. The enzyme catalyses 1-dodecanoyl-sn-glycero-3-phosphocholine + hexadecanoyl-CoA = 1-dodecanoyl-2-hexadecanoyl-sn-glycero-3-phosphocholine + CoA. It carries out the reaction 1-tetradecanoyl-sn-glycero-3-phosphocholine + hexadecanoyl-CoA = 1-tetradecanoyl-2-hexadecanoyl-sn-glycero-3-phosphocholine + CoA. It catalyses the reaction 1-hexadecanoyl-sn-glycero-3-phosphocholine + hexadecanoyl-CoA = 1,2-dihexadecanoyl-sn-glycero-3-phosphocholine + CoA. The catalysed reaction is 1-octadecanoyl-sn-glycero-3-phosphocholine + hexadecanoyl-CoA = 1-octadecanoyl-2-hexadecanoyl-sn-glycero-3-phosphocholine + CoA. The enzyme catalyses 1-(9Z-octadecenoyl)-sn-glycero-3-phosphocholine + hexadecanoyl-CoA = 1-(9Z-octadecenoyl)-2-hexadecanoyl-sn-glycero-3-phosphocholine + CoA. It carries out the reaction (9Z)-hexadecenoyl-CoA + 1-hexadecanoyl-sn-glycero-3-phosphocholine = 1-hexadecanoyl-2-(9Z-hexadecenoyl)-sn-glycero-3-phosphocholine + CoA. It catalyses the reaction 1-hexadecanoyl-sn-glycero-3-phosphocholine + (9Z)-octadecenoyl-CoA = 1-hexadecanoyl-2-(9Z-octadecenoyl)-sn-glycero-3-phosphocholine + CoA. The catalysed reaction is (9Z,12Z)-octadecadienoyl-CoA + 1-hexadecanoyl-sn-glycero-3-phosphocholine = 1-hexadecanoyl-2-(9Z,12Z-octadecadienoyl)-sn-glycero-3-phosphocholine + CoA. The enzyme catalyses 1-dodecanoyl-sn-glycero-3-phosphocholine + (5Z,8Z,11Z,14Z)-eicosatetraenoyl-CoA = 1-dodecanoyl-2-(5Z,8Z,11Z,14Z)-eicosatetraenoyl-sn-glycero-3-phosphocholine + CoA. It carries out the reaction (5Z,8Z,11Z,14Z)-eicosatetraenoyl-CoA + 1-hexadecanoyl-sn-glycero-3-phosphocholine = 1-hexadecanoyl-2-(5Z,8Z,11Z,14Z-eicosatetraenoyl)-sn-glycero-3-phosphocholine + CoA. It catalyses the reaction 1-octadecanoyl-sn-glycero-3-phosphocholine + (5Z,8Z,11Z,14Z)-eicosatetraenoyl-CoA = 1-octadecanoyl-2-(5Z,8Z,11Z,14Z-eicosatetraenoyl)-sn-glycero-3-phosphocholine + CoA. The catalysed reaction is 1-eicosanoyl-sn-glycero-3-phosphocholine + (5Z,8Z,11Z,14Z)-eicosatetraenoyl-CoA = 1-eicosanoyl-2-(5Z,8Z,11Z,14Z)-eicosatetraenoyl-sn-glycero-3-phosphocholine + CoA. The enzyme catalyses 1-(9Z-octadecenoyl)-sn-glycero-3-phosphocholine + (9Z)-octadecenoyl-CoA = 1,2-di-(9Z-octadecenoyl)-sn-glycero-3-phosphocholine + CoA. It carries out the reaction 1-(9Z-octadecenoyl)-sn-glycero-3-phosphocholine + (9Z,12Z)-octadecadienoyl-CoA = 1-(9Z)-octadecenoyl-2-(9Z,12Z)-octadecadienoyl-sn-glycero-3-phosphocholine + CoA. It catalyses the reaction 1-(9Z-octadecenoyl)-sn-glycero-3-phosphocholine + (5Z,8Z,11Z,14Z)-eicosatetraenoyl-CoA = 1-(9Z)-octadecenoyl-2-(5Z,8Z,11Z,14Z)-icosatetraenoyl-sn-glycero-3-phosphocholine + CoA. The catalysed reaction is a 1-acyl-sn-glycero-3-phosphoethanolamine + (9Z,12Z)-octadecadienoyl-CoA = 1-acyl-2-(9Z,12Z)-octadecadienoyl-sn-glycero-3-phosphoethanolamine + CoA. The enzyme catalyses 1-(9Z-octadecenoyl)-sn-glycero-3-phosphoethanolamine + (9Z,12Z)-octadecadienoyl-CoA = 1-(9Z)-octadecenoyl-2-(9Z,12Z)-octadecadienoyl-sn-glycero-3-phosphoethanolamine + CoA. It carries out the reaction 1-(10Z-heptadecenoyl)-sn-glycero-3-phosphoethanolamine + (9Z,12Z)-octadecadienoyl-CoA = 1-(10Z-heptadecenoyl)-2-(9Z,12Z-octadecadienoyl)-sn-glycero-3-phosphoethanolamine + CoA. It catalyses the reaction a 1-acyl-sn-glycero-3-phosphoethanolamine + (5Z,8Z,11Z,14Z)-eicosatetraenoyl-CoA = 1-acyl-2-(5Z,8Z,11Z,14Z)-eicosatetraenoyl-sn-glycero-3-phosphoethanolamine + CoA. The catalysed reaction is 1-hexadecanoyl-sn-glycero-3-phosphoethanolamine + (5Z,8Z,11Z,14Z)-eicosatetraenoyl-CoA = 1-hexadecanoyl-2-(5Z,8Z,11Z,14Z-eicosatetraenoyl)-sn-glycero-3-phosphoethanolamine + CoA. The enzyme catalyses 1-(9Z-octadecenoyl)-sn-glycero-3-phosphoethanolamine + (5Z,8Z,11Z,14Z)-eicosatetraenoyl-CoA = 1-(9Z)-octadecenoyl-2-(5Z,8Z,11Z,14Z)-eicosatetraenoyl-sn-glycero-3-phosphoethanolamine + CoA. It carries out the reaction 1-(10Z-heptadecenoyl)-sn-glycero-3-phosphoethanolamine + (5Z,8Z,11Z,14Z)-eicosatetraenoyl-CoA = 1-(10Z-heptadecenoyl)-2-(5Z,8Z,11Z,14Z-eicosatetraenoyl)-sn-glycero-3-phosphoethanolamine + CoA. It catalyses the reaction a 1-O-(1Z-alkenyl)-sn-glycero-3-phosphoethanolamine + (5Z,8Z,11Z,14Z)-eicosatetraenoyl-CoA = 1-O-(1Z)-alkenyl-2-(5Z,8Z,11Z,14Z)-eicosatetraenoyl-sn-glycero-3-phosphoethanolamine + CoA. The catalysed reaction is a 1-acyl-sn-glycero-3-phospho-L-serine + (9Z,12Z)-octadecadienoyl-CoA = 1-acyl-2-(9Z,12Z-octadecadienoyl)-sn-glycero-3-phospho-L-serine + CoA. The enzyme catalyses a 1-acyl-sn-glycero-3-phospho-L-serine + (5Z,8Z,11Z,14Z)-eicosatetraenoyl-CoA = 1-acyl-2-(5Z,8Z,11Z,14Z-eicosatetraenoyl)-sn-glycero-3-phospho-L-serine + CoA. It carries out the reaction 1-hexadecanoyl-sn-glycero-3-phospho-L-serine + (9Z)-octadecenoyl-CoA = 1-hexadecanoyl-2-(9Z-octadecenoyl)-sn-glycero-3-phospho-L-serine + CoA. It catalyses the reaction 1-(9Z-octadecenoyl)-sn-glycero-3-phospho-L-serine + (9Z)-octadecenoyl-CoA = 1,2-di-(9Z)-octadecenoyl-sn-glycero-3-phospho-L-serine + CoA. The catalysed reaction is 1-hexadecanoyl-sn-glycero-3-phospho-L-serine + (9Z,12Z)-octadecadienoyl-CoA = 1-hexadecanoyl-2-(9Z,12Z-octadecadienoyl)-sn-glycero-3-phospho-L-serine + CoA. The enzyme catalyses 1-(9Z-octadecenoyl)-sn-glycero-3-phospho-L-serine + (9Z,12Z)-octadecadienoyl-CoA = 1-(9Z-octadecenoyl)-2-(9Z,12Z-octadienoyl)-sn-glycero-3-phospho-L-serine + CoA. It carries out the reaction 1-hexadecanoyl-sn-glycero-3-phospho-L-serine + (5Z,8Z,11Z,14Z)-eicosatetraenoyl-CoA = 1-hexadecanoyl-2-(5Z,8Z,11Z,14Z-eicosatetraenoyl)-sn-glycero-3-phospho-L-serine + CoA. It catalyses the reaction 1-(9Z-octadecenoyl)-sn-glycero-3-phospho-L-serine + (5Z,8Z,11Z,14Z)-eicosatetraenoyl-CoA = 1-(9Z-octadecenoyl)-2-(5Z,8Z,11Z,14Z-eicosatetraenoyl)-sn-glycero-3-phospho-L-serine + CoA. It participates in lipid metabolism; phospholipid metabolism. Activity is inhibited by thimerosal. In terms of biological role, lysophospholipid O-acyltransferase (LPLAT) that catalyzes the reacylation step of the phospholipid remodeling process also known as the Lands cycle. Catalyzes transfer of the fatty acyl chain from fatty acyl-CoA to 1-acyl lysophospholipid to form various classes of phospholipids. Converts 1-acyl lysophosphatidylcholine (LPC) into phosphatidylcholine (PC) (LPCAT activity), 1-acyl lysophosphatidylserine (LPS) into phosphatidylserine (PS) (LPSAT activity) and 1-acyl lysophosphatidylethanolamine (LPE) into phosphatidylethanolamine (PE) (LPEAT activity). Favors polyunsaturated fatty acyl-CoAs as acyl donors compared to saturated fatty acyl-CoAs. Has higher activity for LPC acyl acceptors compared to LPEs and LPSs. Can also transfer the fatty acyl chain from fatty acyl-CoA to 1-O-alkyl lysophospholipid or 1-O-alkenyl lysophospholipid with lower efficiency. Acts as a major LPC O-acyltransferase in liver and intestine. As a component of the liver X receptor/NR1H3 or NR1H2 signaling pathway, mainly catalyzes the incorporation of arachidonate into PCs of endoplasmic reticulum (ER) membranes, increasing membrane dynamics and enabling triacylglycerols transfer to nascent very low-density lipoprotein (VLDL) particles. Promotes processing of sterol regulatory protein SREBF1 in hepatocytes, likely by facilitating the translocation of SREBF1-SCAP complex from ER to the Golgi apparatus. Participates in mechanisms by which the liver X receptor/NR1H3 or NR1H2 signaling pathway counteracts lipid-induced ER stress response and inflammation. Down-regulates hepatic inflammation by limiting arachidonic acid availability for synthesis of inflammatory eicosanoids, such as prostaglandins. In enterocytes, acts as a component of a gut-brain feedback loop that coordinates dietary lipid absorption and food intake. Regulates the abundance of PCs containing linoleate and arachidonate in enterocyte membranes, enabling passive diffusion of fatty acids and cholesterol across the membrane for efficient chylomicron assembly. In the intestinal crypt, acts as a component of dietary-responsive phospholipid-cholesterol axis, regulating the biosynthesis of cholesterol and its mitogenic effects on intestinal stem cells. The polypeptide is Lysophospholipid acyltransferase 5 (LPCAT3) (Homo sapiens (Human)).